Consider the following 426-residue polypeptide: Glutamate-1-semialdehyde 2,1-aminomutase (426 aa).

Position 266 is an N6-(pyridoxal phosphate)lysine (K266).

This sequence belongs to the class-III pyridoxal-phosphate-dependent aminotransferase family. HemL subfamily. The cofactor is pyridoxal 5'-phosphate.

It localises to the cytoplasm. The catalysed reaction is (S)-4-amino-5-oxopentanoate = 5-aminolevulinate. It participates in porphyrin-containing compound metabolism; protoporphyrin-IX biosynthesis; 5-aminolevulinate from L-glutamyl-tRNA(Glu): step 2/2. The protein is Glutamate-1-semialdehyde 2,1-aminomutase (hemL) of Methanocaldococcus jannaschii (strain ATCC 43067 / DSM 2661 / JAL-1 / JCM 10045 / NBRC 100440) (Methanococcus jannaschii).